Consider the following 137-residue polypeptide: Large ribosomal subunit protein uL16 (137 aa).

It belongs to the universal ribosomal protein uL16 family. As to quaternary structure, part of the 50S ribosomal subunit.

Its function is as follows. Binds 23S rRNA and is also seen to make contacts with the A and possibly P site tRNAs. The chain is Large ribosomal subunit protein uL16 from Halorhodospira halophila (strain DSM 244 / SL1) (Ectothiorhodospira halophila (strain DSM 244 / SL1)).